Here is a 708-residue protein sequence, read N- to C-terminus: tRNA 5-methylaminomethyl-2-thiouridine biosynthesis bifunctional protein MnmC (708 aa).

Residues Met1–Ala278 are tRNA (mnm(5)s(2)U34)-methyltransferase. The interval Ile301–Leu708 is FAD-dependent cmnm(5)s(2)U34 oxidoreductase.

It in the N-terminal section; belongs to the methyltransferase superfamily. tRNA (mnm(5)s(2)U34)-methyltransferase family. In the C-terminal section; belongs to the DAO family. The cofactor is FAD.

The protein resides in the cytoplasm. The catalysed reaction is 5-aminomethyl-2-thiouridine(34) in tRNA + S-adenosyl-L-methionine = 5-methylaminomethyl-2-thiouridine(34) in tRNA + S-adenosyl-L-homocysteine + H(+). Functionally, catalyzes the last two steps in the biosynthesis of 5-methylaminomethyl-2-thiouridine (mnm(5)s(2)U) at the wobble position (U34) in tRNA. Catalyzes the FAD-dependent demodification of cmnm(5)s(2)U34 to nm(5)s(2)U34, followed by the transfer of a methyl group from S-adenosyl-L-methionine to nm(5)s(2)U34, to form mnm(5)s(2)U34. This is tRNA 5-methylaminomethyl-2-thiouridine biosynthesis bifunctional protein MnmC from Shewanella baltica (strain OS195).